A 433-amino-acid chain; its full sequence is Metacaspase-1 (433 aa).

The segment at 1–123 (MYPGRAKPTY…PPSQVQHTGP (123 aa)) is disordered. Low complexity predominate over residues 9–44 (TYNNQQAQQAQSQVGYQTGYSNAQPQQQYYTAPQQQ). Polar residues-rich tracts occupy residues 45-55 (NVSGSSMSFQH) and 83-109 (QQNY…QQPQ). Catalysis depends on residues His222 and Cys278.

The protein belongs to the peptidase C14B family.

In terms of biological role, involved in cell death (apoptosis). The sequence is that of Metacaspase-1 (MCA1) from Kluyveromyces lactis (strain ATCC 8585 / CBS 2359 / DSM 70799 / NBRC 1267 / NRRL Y-1140 / WM37) (Yeast).